We begin with the raw amino-acid sequence, 352 residues long: Desmethylxanthohumol 6'-O-methyltransferase (352 aa).

Aspartate 219 lines the S-adenosyl-L-methionine pocket. The active-site Proton acceptor is histidine 257.

It belongs to the class I-like SAM-binding methyltransferase superfamily. Cation-independent O-methyltransferase family. In terms of assembly, homodimer. In terms of tissue distribution, highly expressed in lupulin glands. Detected in early-, mid- and late-stage cones.

It is found in the cytoplasm. The enzyme catalyses desmethylxanthohumol + S-adenosyl-L-methionine = xanthohumol + S-adenosyl-L-homocysteine + H(+). It carries out the reaction xanthogalenol + S-adenosyl-L-methionine = 4'-O-methylxanthohumol + S-adenosyl-L-homocysteine + H(+). The protein operates within secondary metabolite biosynthesis. Inhibited by S-adenosyl homocysteine. Its function is as follows. Involved in the biosynthesis of prenylated phenolics natural products which contribute to the bitter taste of beer and display broad biological activities. Catalyzes the biosynthesis of xanthohumol. Methylates desmethylxanthohumol and xanthogalenol, but not caffeic acid, prenylflavanones, simple phenols or phenylpropanoids. This Humulus lupulus (European hop) protein is Desmethylxanthohumol 6'-O-methyltransferase.